We begin with the raw amino-acid sequence, 307 residues long: Small ribosomal subunit protein uS2 (307 aa).

The tract at residues 256–307 is disordered; it reads GGEAEQAAVDATGGAATEETPAAESTGAASEAAAVSEAAEPATEQPAADAEA. Low complexity predominate over residues 259 to 307; the sequence is AEQAAVDATGGAATEETPAAESTGAASEAAAVSEAAEPATEQPAADAEA.

This sequence belongs to the universal ribosomal protein uS2 family.

This chain is Small ribosomal subunit protein uS2, found in Nocardioides sp. (strain ATCC BAA-499 / JS614).